The primary structure comprises 307 residues: Protoheme IX farnesyltransferase (307 aa).

A run of 8 helical transmembrane segments spans residues 32–52 (MGIV…ALHF), 65–85 (FFTI…NNYI), 108–128 (PGFA…FLLL), 131–151 (PMAV…YSLW), 158–178 (LNTV…WAAI), 186–206 (IAWM…LALA), 251–271 (LGIT…VLGF), and 287–307 (FVYS…VTFF).

The protein belongs to the UbiA prenyltransferase family. Protoheme IX farnesyltransferase subfamily. Interacts with CtaA.

The protein localises to the cell membrane. The enzyme catalyses heme b + (2E,6E)-farnesyl diphosphate + H2O = Fe(II)-heme o + diphosphate. Its pathway is porphyrin-containing compound metabolism; heme O biosynthesis; heme O from protoheme: step 1/1. Converts heme B (protoheme IX) to heme O by substitution of the vinyl group on carbon 2 of heme B porphyrin ring with a hydroxyethyl farnesyl side group. This chain is Protoheme IX farnesyltransferase, found in Bacillus cereus (strain ATCC 10987 / NRS 248).